The sequence spans 339 residues: Methionine import ATP-binding protein MetN 1 (339 aa).

The 240-residue stretch at 2-241 folds into the ABC transporter domain; that stretch reads ISFNNVSKVY…PKTKTTQNFV (240 aa). Residue 38 to 45 participates in ATP binding; sequence GFSGAGKS.

The protein belongs to the ABC transporter superfamily. Methionine importer (TC 3.A.1.24) family. In terms of assembly, the complex is composed of two ATP-binding proteins (MetN), two transmembrane proteins (MetI) and a solute-binding protein (MetQ).

Its subcellular location is the cell membrane. It catalyses the reaction L-methionine(out) + ATP + H2O = L-methionine(in) + ADP + phosphate + H(+). It carries out the reaction D-methionine(out) + ATP + H2O = D-methionine(in) + ADP + phosphate + H(+). Its function is as follows. Part of the ABC transporter complex MetNIQ involved in methionine import. Responsible for energy coupling to the transport system. The polypeptide is Methionine import ATP-binding protein MetN 1 (Bacillus thuringiensis subsp. konkukian (strain 97-27)).